We begin with the raw amino-acid sequence, 930 residues long: MKLKETLNLGKTDFPMRAGLPTKEPVWQKEWEEAKLYQRRQELNQGKPHFTLHDGPPYANGNIHVGHAMNKISKDIIVRSKSMSGFYAPYIPGWDTHGLPIEQVLAKQGVKRKEMDLVEYLKLCREYALSQVDKQREDFKRLGVSGDWENPYVTLTPDYEAAQIRVFGEMAKKGYIYRGAKPVYWSWSSESALAEAEIEYHDLLSTSLYYANRVKDGKGVLDTDTYIVVWTTTPFTITASRGLTVGADIDYVLVQPAGESRKFVVASELLNSLSEKFGWADVQVLATYRGQELNHIVTVHPWDTAVDELVILGDHVTTDSGTGIVHTAPGFGEDDYNVGVANGLEVAVTVNERGIMMENAGPEFAGQFYDKVVPTVIEKLGDLLLAQEEISHSYPFDWRTKKPIIWRAVPQWFASVSKFRQEILDEIEKVKFHSEWGKVRLYNMIRDRGDWVISRQRAWGVPLPIFYAEDGTPIMTVETIEHVAQLFEEHGSIIWWERDAKDLLPEGFTHPGSPNGEFKKETDIMDVWFDSGSSWNGVVVNRPELKYPADLYLEGSDQYRGWFNSSLITSVANHGVAPYKQILSQGFALDGKGEKMSKSLGNTIAPSDVEKQFGAEILRLWVTSVDSSNDVRISMDILSQVSETYRKIRNTLRFLIANTSDFNPAEDTVAYEELRSVDKYMTVRFNQLVKTIRDAYADFEFLTIYKALVNFINVDLSAFYLDFAKDVVYIEGAKSLERRQMQTVFYDILVKITKLLTPILPHTAEEIWSYLEFEAEDFVQLSELPEAETFANQEEILNTWAAFMDFRGQAQKALEEARNAKVIGKSLEAHLTIYPNEVVKTLLGAVDSNVAQLLIVSELTIAEGGAPEGAVSFEDVAFTVERAAGEVCDRCRRIDPTTAERNYHAVICDHCASIVEENFADAVAEGFETK.

The short motif at 57–67 (PYANGNIHVGH) is the 'HIGH' region element. Glu-554 provides a ligand contact to L-isoleucyl-5'-AMP. Positions 595 to 599 (KMSKS) match the 'KMSKS' region motif. An ATP-binding site is contributed by Lys-598. Zn(2+) is bound by residues Cys-888, Cys-891, Cys-908, and Cys-911.

It belongs to the class-I aminoacyl-tRNA synthetase family. IleS type 1 subfamily. As to quaternary structure, monomer. Zn(2+) serves as cofactor.

The protein resides in the cytoplasm. The catalysed reaction is tRNA(Ile) + L-isoleucine + ATP = L-isoleucyl-tRNA(Ile) + AMP + diphosphate. Catalyzes the attachment of isoleucine to tRNA(Ile). As IleRS can inadvertently accommodate and process structurally similar amino acids such as valine, to avoid such errors it has two additional distinct tRNA(Ile)-dependent editing activities. One activity is designated as 'pretransfer' editing and involves the hydrolysis of activated Val-AMP. The other activity is designated 'posttransfer' editing and involves deacylation of mischarged Val-tRNA(Ile). The chain is Isoleucine--tRNA ligase from Streptococcus gordonii (strain Challis / ATCC 35105 / BCRC 15272 / CH1 / DL1 / V288).